Reading from the N-terminus, the 490-residue chain is CUGBP Elav-like family member 1 (490 aa).

RRM domains are found at residues 16–99 (IKMF…PADS) and 108–188 (RKLF…FADT). Positions 283–312 (PSAGSALTTSSSPLSILTSSGSSPSSNNNS) are disordered. The 79-residue stretch at 405–483 (ANLFIYHLPQ…KRLKVQLKRS (79 aa)) folds into the RRM 3 domain.

This sequence belongs to the CELF/BRUNOL family. Oligomer. Oligomerization is required for RNA-binding and EDEN-dependent deadenylation. Post-translationally, phosphorylated during oocyte maturation and dephosphorylated following egg activation. Dephosphorylation is calcium dependent and correlates with the increase in the activity of EDEN-dependent deadenylation.

The protein localises to the nucleus. It localises to the cytoplasm. RNA-binding protein implicated in the regulation of several post-transcriptional events. May be involved in pre-mRNA alternative splicing, mRNA translation activation and stability. Mediates the rapid and sequence-specific cytoplasmic deadenylation of EDEN-containing maternal mRNAs following fertilization. Binds to AU-rich sequences (AREs) of jun mRNA. Binds to the embryonic deadenylation element (EDEN) motif localized in the 3'-UTR of maternal mRNAs. Binds to RNA containing several repeats of the consensus sequence 5'-UGU-3'. EDEN-dependent deadenylation is enhanced by the presence of an additional cis element composed of three AUU repeats. This is CUGBP Elav-like family member 1 (celf1) from Xenopus tropicalis (Western clawed frog).